A 244-amino-acid polypeptide reads, in one-letter code: RAD51-like protein 1 (244 aa).

Interacts with brc-2 and rad-51.

It is found in the nucleus. Functionally, has a role in the homologous recombination repair (HRR) of genomic DNA during meiosis. Required for rad-51 recruitment onto ssDNA gaps generated at stalled replication fork barriers. This chain is RAD51-like protein 1, found in Caenorhabditis briggsae.